The chain runs to 204 residues: Large ribosomal subunit protein eL15 (204 aa).

The protein belongs to the eukaryotic ribosomal protein eL15 family. In terms of assembly, component of the large ribosomal subunit.

The protein resides in the cytoplasm. Its function is as follows. Component of the large ribosomal subunit. The ribosome is a large ribonucleoprotein complex responsible for the synthesis of proteins in the cell. This chain is Large ribosomal subunit protein eL15 (rpl15), found in Megalobrama amblycephala (Chinese blunt snout bream).